Consider the following 522-residue polypeptide: Nuclear pore glycoprotein p62 (522 aa).

N-acetylserine is present on Ser-2. 5 consecutive repeat copies span residues 6 to 7, 44 to 45, 76 to 77, 114 to 115, and 142 to 143. The segment at 6–143 is 5 X 2 AA repeats of F-G; it reads FGGTGAPTGG…GTAPTGFVFG (138 aa). Polar residues predominate over residues 169-179; sequence SGFNIGSAGNS. 2 disordered regions span residues 169–215 and 260–288; these read SGFN…ATIT and APGAASGTSTTTSTAATATATTTSSSSTT. Low complexity-rich tracts occupy residues 180–215 and 262–288; these read AQPTAPATLPFTPATPAATTAGATQPAAPTPTATIT and GAASGTSTTTSTAATATATTTSSSSTT. The tract at residues 328–458 is required for centrosome localization; that stretch reads MTYAQLESLI…QDLKDIIEHL (131 aa). Positions 328–458 form a coiled coil; the sequence is MTYAQLESLI…QDLKDIIEHL (131 aa). An O-linked (GlcNAc) threonine glycan is attached at Thr-373. Phosphoserine is present on residues Ser-408 and Ser-418. Residue Ser-468 is glycosylated (O-linked (GlcNAc) serine).

It belongs to the nucleoporin NSP1/NUP62 family. As to quaternary structure, component of the p62 complex, a complex at least composed of NUP62, NUP54, and NUP58. Interacts with NUP88. Interacts with NUTF2. Interacts with HIKESHI. Interacts with OSBPL8. Interacts with CAPG. Interacts with SAS6 and TUBG1 at the centrosome. Interacts with MCM3AP isoform GANP. In terms of assembly, (Microbial infection) Interacts with Epstein-barr virus BGLF4; this interaction allows BGLF4 nuclear entry. Post-translationally, O-glycosylated. Contains about 10 N-acetylglucosamine side chain sites predicted for the entire protein, among which only one in the C-terminal. In terms of processing, the inner channel of the NPC has a different redox environment from the cytoplasm and allows the formation of interchain disulfide bonds between some nucleoporins, the significant increase of these linkages upon oxidative stress reduces the permeability of the NPC.

It localises to the nucleus. The protein resides in the nuclear pore complex. It is found in the cytoplasm. The protein localises to the cytoskeleton. Its subcellular location is the spindle pole. It localises to the nucleus envelope. The protein resides in the microtubule organizing center. It is found in the centrosome. In terms of biological role, essential component of the nuclear pore complex. The N-terminal is probably involved in nucleocytoplasmic transport. The C-terminal is involved in protein-protein interaction probably via coiled-coil formation, promotes its association with centrosomes and may function in anchorage of p62 to the pore complex. Plays a role in mitotic cell cycle progression by regulating centrosome segregation, centriole maturation and spindle orientation. It might be involved in protein recruitment to the centrosome after nuclear breakdown. The polypeptide is Nuclear pore glycoprotein p62 (NUP62) (Homo sapiens (Human)).